A 204-amino-acid polypeptide reads, in one-letter code: Ciliary microtubule inner protein 7 (204 aa).

It is found in the cell projection. It localises to the cilium. The polypeptide is Ciliary microtubule inner protein 7 (Homo sapiens (Human)).